An 81-amino-acid chain; its full sequence is Acyl carrier protein (81 aa).

The region spanning 4–79 (DEVYSRVRKI…DAVNYILSKK (76 aa)) is the Carrier domain. The residue at position 39 (S39) is an O-(pantetheine 4'-phosphoryl)serine.

It belongs to the acyl carrier protein (ACP) family. In terms of processing, 4'-phosphopantetheine is transferred from CoA to a specific serine of apo-ACP by AcpS. This modification is essential for activity because fatty acids are bound in thioester linkage to the sulfhydryl of the prosthetic group.

Its subcellular location is the cytoplasm. It participates in lipid metabolism; fatty acid biosynthesis. In terms of biological role, carrier of the growing fatty acid chain in fatty acid biosynthesis. This Synechococcus sp. (strain JA-3-3Ab) (Cyanobacteria bacterium Yellowstone A-Prime) protein is Acyl carrier protein.